We begin with the raw amino-acid sequence, 182 residues long: Transcription termination/antitermination protein NusG (182 aa).

Positions 130-161 (VGEVVRVNEGPFADFNGTVEEVDYEKSRLKVS) constitute a KOW domain.

This sequence belongs to the NusG family.

Functionally, participates in transcription elongation, termination and antitermination. The chain is Transcription termination/antitermination protein NusG from Vibrio vulnificus (strain CMCP6).